Reading from the N-terminus, the 92-residue chain is MARSVWKGPFVDGYLIKKVQKLMESGKSEMIKTWSRRSTILPIFVGFTFSVHNGNKFIPVSVNEEMVGRKLGEFSPTRTFHGHGADKKVKRK.

It belongs to the universal ribosomal protein uS19 family.

Its function is as follows. Protein S19 forms a complex with S13 that binds strongly to the 16S ribosomal RNA. The chain is Small ribosomal subunit protein uS19 from Rickettsia bellii (strain OSU 85-389).